The primary structure comprises 244 residues: MMKQSPFSLLTSIFLIAALFTATTALDPAPEDPIFELYMHDILGGSSPTARPITGLLGNIYNGQVPFAKQIGFVPPQNGVAIPNANGAMPTVNGINGIPLGTGLSGTAFSGQNLNGIQTQLGPDGLSLGFGTITVIDDIITSGPDLGSQPLGKAQGVYVASSADGSTQMMAFTAMLEGGEYNDNLNFYGIYRIGSAMSHLSVTGGTGRFKNACGFAEVRPLIPAGQHFVDGAEMLLRIIVHLKY.

An N-terminal signal peptide occupies residues 1 to 25 (MMKQSPFSLLTSIFLIAALFTATTA).

The protein belongs to the plant dirigent protein family. As to quaternary structure, homodimer.

The protein localises to the secreted. The protein resides in the extracellular space. It localises to the apoplast. Dirigent proteins impart stereoselectivity on the phenoxy radical-coupling reaction, yielding optically active lignans from two molecules of coniferyl alcohol in the biosynthesis of lignans, flavonolignans, and alkaloids and thus plays a central role in plant secondary metabolism. The protein is Dirigent protein 18 (DIR18) of Arabidopsis thaliana (Mouse-ear cress).